The sequence spans 391 residues: Lysophosphatidylinositol acyltransferase 10 (391 aa).

5 helical membrane passes run 10 to 30 (LLGW…NYII), 52 to 72 (AISY…GVRI), 97 to 119 (WMYM…KISL), 323 to 343 (LTSL…IFFV), and 347 to 367 (QLGF…YGGI).

Belongs to the 1-acyl-sn-glycerol-3-phosphate acyltransferase family. Expressed in seam cells, vulval epithelial cells and the major epithelial syncytium hyp7, and in several head neurons including AIY interneurons.

It localises to the endoplasmic reticulum membrane. It catalyses the reaction a 2-acyl-sn-glycero-3-phospho-D-myo-inositol + an acyl-CoA = a 1,2-diacyl-sn-glycero-3-phospho-(1D-myo-inositol) + CoA. The enzyme catalyses a 2-acyl-sn-glycero-3-phospho-D-myo-inositol + octadecanoyl-CoA = 1-octadecanoyl-2-acyl-sn-glycero-3-phospho-1D-myo-inositol + CoA. Its pathway is phospholipid metabolism; phosphatidylinositol metabolism. Its function is as follows. Acyltransferase required for the fatty acid remodeling of phosphatidylinositol (1,2-diacyl-sn-glycero-3-phosphoinositol or PI). Mediates the conversion of lysophosphatidylinositol (2-acylglycerophosphatidylinositol or LPI) into PI (LPIAT activity). Has preference for saturated and mono-unsaturated fatty acids as acyl donors and sn-2-acyl lysoPI (2-acyl-sn-glycero-3-phospho-D-myo-inositol) as acyl acceptor. Contributes to the asymmetric cell division of epithelial cells. Asymmetric cell division is the fundamental mechanism by which multicellular organisms generate cell diversity. The sequence is that of Lysophosphatidylinositol acyltransferase 10 from Caenorhabditis elegans.